A 288-amino-acid chain; its full sequence is Undecaprenyl-diphosphatase (288 aa).

The next 8 helical transmembrane spans lie at 25–45 (GITE…NEFL), 53–73 (FIDM…MVIY), 93–113 (WKLW…GLLL), 121–141 (LSNF…FIWI), 171–191 (VLSI…GIIV), 196–216 (SVAA…YSGL), 231–251 (GQAA…LFVI), and 263–283 (FTVF…YGAV).

It belongs to the UppP family.

The protein localises to the cell membrane. It carries out the reaction di-trans,octa-cis-undecaprenyl diphosphate + H2O = di-trans,octa-cis-undecaprenyl phosphate + phosphate + H(+). In terms of biological role, catalyzes the dephosphorylation of undecaprenyl diphosphate (UPP). Confers resistance to bacitracin. This Streptococcus thermophilus (strain ATCC BAA-250 / LMG 18311) protein is Undecaprenyl-diphosphatase.